The sequence spans 301 residues: Galectin-6 (301 aa).

Galectin domains lie at 19–149 (YKRP…INFF) and 173–301 (YVGA…YVHI).

The sequence is that of Galectin-6 (Lgals6) from Mus musculus (Mouse).